The following is an 88-amino-acid chain: Large ribosomal subunit protein bL27 (88 aa).

Belongs to the bacterial ribosomal protein bL27 family.

The sequence is that of Large ribosomal subunit protein bL27 from Mycolicibacterium vanbaalenii (strain DSM 7251 / JCM 13017 / BCRC 16820 / KCTC 9966 / NRRL B-24157 / PYR-1) (Mycobacterium vanbaalenii).